The following is a 142-amino-acid chain: MKTFTATPETVTRDWFVVDAEGKTLGRIATEIAIRLRGKHKPEYTPHVDTGDYIIVINAEKVTVTGNKAAGKIYYSHSGFPGGIKQISFEKLQAQKPEMIIEKAVKGMLPKGPLGRAMFRKLKVYAGVEHNHAAQQPQVLDI.

The protein belongs to the universal ribosomal protein uL13 family. In terms of assembly, part of the 50S ribosomal subunit.

This protein is one of the early assembly proteins of the 50S ribosomal subunit, although it is not seen to bind rRNA by itself. It is important during the early stages of 50S assembly. This chain is Large ribosomal subunit protein uL13, found in Shewanella denitrificans (strain OS217 / ATCC BAA-1090 / DSM 15013).